Consider the following 412-residue polypeptide: Phytoene synthase, chloroplastic (412 aa).

Belongs to the phytoene/squalene synthase family. In terms of assembly, monomer. As to expression, expressed in roots, leaves, flower buds, sepals, petals, lips and lip crests.

The protein resides in the plastid. The protein localises to the chloroplast. The enzyme catalyses 2 (2E,6E,10E)-geranylgeranyl diphosphate = 15-cis-phytoene + 2 diphosphate. Its pathway is carotenoid biosynthesis; phytoene biosynthesis; all-trans-phytoene from geranylgeranyl diphosphate: step 1/1. In terms of biological role, catalyzes the reaction from prephytoene diphosphate to phytoene. The sequence is that of Phytoene synthase, chloroplastic (PSY) from Oncidium hybrid cultivar (Orchid).